A 487-amino-acid chain; its full sequence is Probable glutamate receptor (487 aa).

The first 23 residues, 1-23, serve as a signal peptide directing secretion; it reads MDKGQHFVFFVLTTVLLLRESSH. The Extracellular segment spans residues 24 to 169; sequence AGAMRNDAAA…FFHFLAPFSK (146 aa). N104 carries an N-linked (GlcNAc...) asparagine glycan. A helical transmembrane segment spans residues 170-190; it reads ETWTGLLFAYILTCFCLFLVA. At 191-235 the chain is on the cytoplasmic side; sequence RLSPCEWNEPKNEENHFTFLNSLWFGAGALALQGVTPRPKALSVR. The chain crosses the membrane as a helical span at residues 236 to 256; it reads VIAAIWWLFTIALLAAYIANF. Residues 257-419 are Extracellular-facing; that stretch reads TALLSSGSEQ…ERWSPLQPQA (163 aa). The helical transmembrane segment at 420 to 440 threads the bilayer; that stretch reads LGGLFLTLAIGLALGVIAAVV. Residues 441–487 are Cytoplasmic-facing; the sequence is ELSNKSRHAAGHVKKSCCSIFTEEMCTRLRIKENTRQSQETSGRANA.

The protein belongs to the glutamate-gated ion channel (TC 1.A.10.1) family.

Its subcellular location is the cell membrane. It localises to the postsynaptic cell membrane. Receptor for glutamate. L-glutamate acts as an excitatory neurotransmitter at many synapses in the central nervous system. The postsynaptic actions of Glu are mediated by a variety of receptors that are named according to their selective agonists. In Anas platyrhynchos (Mallard), this protein is Probable glutamate receptor (KBP).